The sequence spans 539 residues: Monocarboxylate transporter 8 (539 aa).

The segment at M1 to F92 is disordered. Residue A2 is modified to N-acetylalanine. The Cytoplasmic portion of the chain corresponds to A2–E96. A compositionally biased stretch (acidic residues) spans P31–P41. A compositionally biased stretch (pro residues) spans E42–L64. Residues G97–I117 traverse the membrane as a helical segment. Residues H118–A143 lie on the Extracellular side of the membrane. A helical membrane pass occupies residues A144–F164. Residues T165 to R171 are Cytoplasmic-facing. A helical transmembrane segment spans residues I172–S192. Residues S193–T200 lie on the Extracellular side of the membrane. The chain crosses the membrane as a helical span at residues Y201–G221. The Cytoplasmic segment spans residues H222 to G229. Residues L230 to I250 form a helical membrane-spanning segment. Topologically, residues R251–K258 are extracellular. The helical transmembrane segment at L259–T279 threads the bilayer. At Y280–R322 the chain is on the cytoplasmic side. A helical transmembrane segment spans residues I323–M343. The Extracellular segment spans residues K344–T356. A helical membrane pass occupies residues W357 to I377. The Cytoplasmic portion of the chain corresponds to S378–K386. Residues I387–C407 traverse the membrane as a helical segment. Residues R408–D409 lie on the Extracellular side of the membrane. A helical transmembrane segment spans residues F410–I430. Residues M431 to A447 lie on the Cytoplasmic side of the membrane. Residues I448–L468 form a helical membrane-spanning segment. Residues L469–H477 lie on the Extracellular side of the membrane. Residues V478–P498 traverse the membrane as a helical segment. Residues L499–I539 are Cytoplasmic-facing. Basic and acidic residues predominate over residues E508–L518. The segment at E508–I539 is disordered.

This sequence belongs to the major facilitator superfamily. Monocarboxylate porter (TC 2.A.1.13) family. In terms of assembly, monomer. Homodimer. Homooligomer. As to expression, highly expressed in liver and heart. In adult brain tissue expression is largely confined to endothelial cells of the blood-brain barrier (at protein level).

The protein localises to the cell membrane. Its subcellular location is the apical cell membrane. The catalysed reaction is 3,3',5-triiodo-L-thyronine(out) = 3,3',5-triiodo-L-thyronine(in). It carries out the reaction L-thyroxine(out) = L-thyroxine(in). It catalyses the reaction 3,3',5'-triiodo-L-thyronine(out) = 3,3',5'-triiodo-L-thyronine(in). The enzyme catalyses 3,3'-diiodo-L-thyronine(out) = 3,3'-diiodo-L-thyronine(in). Its function is as follows. Specific thyroid hormone transmembrane transporter, that mediates both uptake and efflux of thyroid hormones across the cell membrane independently of pH or a Na(+) gradient. Major substrates are the iodothyronines T3 and T4 and to a lesser extent rT3 and 3,3-diiodothyronine (3,3'-T2). Acts as an important mediator of thyroid hormone transport, especially T3, through the blood-brain barrier. In Homo sapiens (Human), this protein is Monocarboxylate transporter 8 (SLC16A2).